Here is a 319-residue protein sequence, read N- to C-terminus: Acetyl-coenzyme A carboxylase carboxyl transferase subunit alpha (319 aa).

One can recognise a CoA carboxyltransferase C-terminal domain in the interval 35-296 (NLDEEVQRLR…KAQLLIDLAE (262 aa)).

This sequence belongs to the AccA family. As to quaternary structure, acetyl-CoA carboxylase is a heterohexamer composed of biotin carboxyl carrier protein (AccB), biotin carboxylase (AccC) and two subunits each of ACCase subunit alpha (AccA) and ACCase subunit beta (AccD).

The protein localises to the cytoplasm. It catalyses the reaction N(6)-carboxybiotinyl-L-lysyl-[protein] + acetyl-CoA = N(6)-biotinyl-L-lysyl-[protein] + malonyl-CoA. It participates in lipid metabolism; malonyl-CoA biosynthesis; malonyl-CoA from acetyl-CoA: step 1/1. In terms of biological role, component of the acetyl coenzyme A carboxylase (ACC) complex. First, biotin carboxylase catalyzes the carboxylation of biotin on its carrier protein (BCCP) and then the CO(2) group is transferred by the carboxyltransferase to acetyl-CoA to form malonyl-CoA. This chain is Acetyl-coenzyme A carboxylase carboxyl transferase subunit alpha, found in Photorhabdus laumondii subsp. laumondii (strain DSM 15139 / CIP 105565 / TT01) (Photorhabdus luminescens subsp. laumondii).